Here is a 516-residue protein sequence, read N- to C-terminus: Acyl-lipid (7-3)-desaturase, chloroplastic (516 aa).

Residues 1–25 (MNATMQRSAVAGRTSGKVATTARAS) are disordered. A chloroplast-targeting transit peptide spans 1-47 (MNATMQRSAVAGRTSGKVATTARASSMARPRLPIAGRVARRSAVTVR). Residues 83–148 (WTVYRGVAYD…LADFPVDAVP (66 aa)) form the Cytochrome b5 heme-binding domain. Residues histidine 100 and histidine 123 each coordinate heme. 2 helical membrane-spanning segments follow: residues 186–206 (GAAF…TYDA) and 209–229 (LTGA…QHCG). The Histidine box-1 signature appears at 227-231 (HCGNH). The Histidine box-2 motif lies at 262–267 (HQVSHH). The next 4 membrane-spanning stretches (helical) occupy residues 305-325 (MWAL…QALL), 354-374 (FLLY…GGAA), 375-395 (GYLF…HNVP), and 423-443 (VLTS…GLNL). The Histidine box-3 motif lies at 444 to 448 (QIEHH).

Belongs to the fatty acid desaturase type 1 family. Requires Fe(2+) as cofactor.

It localises to the plastid. Its subcellular location is the chloroplast membrane. The catalysed reaction is a (7Z,10Z,13Z,16Z,19Z)-docosapentaenoyl-containing glycerolipid + 2 Fe(II)-[cytochrome b5] + O2 + 2 H(+) = a (4Z,7Z,10Z,13Z,16Z,19Z)-docosahexaenoyl-containing glycerolipid + 2 Fe(III)-[cytochrome b5] + 2 H2O. The enzyme catalyses a (7Z,10Z,13Z,16Z)-docosatetraenoyl-containing glycerolipid + 2 Fe(II)-[cytochrome b5] + O2 + 2 H(+) = a (4Z,7Z,10Z,13Z,16Z)-docosapentaenoyl-containing glycerolipid + 2 Fe(III)-[cytochrome b5] + 2 H2O. Functionally, fatty acid desaturase that introduces a cis double bond at the 4-position in 16-carbon polyunsaturated fatty acids that contain a Delta(7) double bond, resulting in the production of 16 carbon fatty acid (7Z,10Z,13Z)-hexadeca-7,10,13-trienoate. This Chlamydomonas reinhardtii (Chlamydomonas smithii) protein is Acyl-lipid (7-3)-desaturase, chloroplastic.